A 421-amino-acid polypeptide reads, in one-letter code: MKQTITEKIFSEHVQHAVYAGQIVETKIDMVIGNDITTPISIRAFKESGAKKLANPDGFAIVMDHYIPAKDIASANQAKISRDFAYEHDLKNFFDEKDMGIEHALMPEKGLVVPGDVIIGADSHTCTHGALGAFSTGMGSTDLAYAMITGKNWFKVPATIKVEFVGKPAKHIYGKDLILEVIRQIGVDGALYKALEFCGDAMKYLDMDSRFSLCNMAIEAGGKSGIIAVDDITKEFLESKNLRSKPKFHYSDEGANYEQVLRIDVSKLDPVIAYPFLPSNGKSINEALKDDLKIDQVFIGSCTNGRLSDLRIAARILKGKRVAKHTRLIITPATQKIALAAQKEGLMDIFVEAGAVVSNPTCGACLGGYMGILGAGERCVSTTNRNFVGRMGDRTSEVYLANSAVAAASAIAGKIADPRVL.

3 residues coordinate [4Fe-4S] cluster: C302, C362, and C365.

This sequence belongs to the aconitase/IPM isomerase family. LeuC type 2 subfamily. In terms of assembly, heterodimer of LeuC and LeuD. Requires [4Fe-4S] cluster as cofactor.

It catalyses the reaction (2R,3S)-3-isopropylmalate = (2S)-2-isopropylmalate. It participates in amino-acid biosynthesis; L-leucine biosynthesis; L-leucine from 3-methyl-2-oxobutanoate: step 2/4. Catalyzes the isomerization between 2-isopropylmalate and 3-isopropylmalate, via the formation of 2-isopropylmaleate. This Campylobacter fetus subsp. fetus (strain 82-40) protein is 3-isopropylmalate dehydratase large subunit.